We begin with the raw amino-acid sequence, 763 residues long: Exo-1,4-beta-xylosidase bxlB (763 aa).

Residues 1 to 23 (MAVFKSWNLALLSSLFIPALCQS) form the signal peptide. The N-linked (GlcNAc...) asparagine glycan is linked to Asn63. The active site involves Asp288. Asn340, Asn408, Asn419, Asn458, Asn621, and Asn760 each carry an N-linked (GlcNAc...) asparagine glycan.

This sequence belongs to the glycosyl hydrolase 3 family.

It localises to the secreted. The enzyme catalyses Hydrolysis of (1-&gt;4)-beta-D-xylans, to remove successive D-xylose residues from the non-reducing termini.. It functions in the pathway glycan degradation; xylan degradation. Functionally, xylan 1,4-beta-xylosidase involved in the hydrolysis of xylan, a major structural heterogeneous polysaccharide found in plant biomass representing the second most abundant polysaccharide in the biosphere, after cellulose. Active against rye arabinoxylan and xylohexaose, but not paranitrophenyl-beta-xyloside. The sequence is that of Exo-1,4-beta-xylosidase bxlB (bxlB) from Emericella nidulans (strain FGSC A4 / ATCC 38163 / CBS 112.46 / NRRL 194 / M139) (Aspergillus nidulans).